The sequence spans 214 residues: Phosphopantothenoylcysteine decarboxylase HAL3 (214 aa).

FMN contacts are provided by residues 30-32 and 55-57; these read GSV and TRA. The active-site Proton donor is the His-92. Residues 108–111 and Ala-142 each bind FMN; that span reads SANT. N-[(R)-4-phosphopantothenoyl]-L-cysteine is bound by residues Asn-144, Arg-174, and Ala-176. The active-site Proton donor is the Cys-177. Residue Met-185 participates in N-[(R)-4-phosphopantothenoyl]-L-cysteine binding.

The protein belongs to the HFCD (homooligomeric flavin containing Cys decarboxylase) superfamily. As to quaternary structure, homotrimer. FMN is required as a cofactor. Mainly expressed in stems, to a lower extent in flowers, leaves and fruits, and at basal levels in roots.

It localises to the cell membrane. It is found in the cytoplasm. The catalysed reaction is N-[(R)-4-phosphopantothenoyl]-L-cysteine + H(+) = (R)-4'-phosphopantetheine + CO2. It functions in the pathway cofactor biosynthesis; coenzyme A biosynthesis; CoA from (R)-pantothenate: step 3/5. In terms of biological role, involved in plant growth, and promotes salt and osmotic tolerance, probably via coenzyme A (CoA) accumulation and endogenous proline accumulation. Catalyzes the decarboxylation of 4'-phosphopantothenoylcysteine to 4'-phosphopantetheine, a key step in coenzyme A biosynthesis. Required for roots development. The protein is Phosphopantothenoylcysteine decarboxylase HAL3 of Malus domestica (Apple).